The following is a 186-amino-acid chain: Elongation factor P (186 aa).

Belongs to the elongation factor P family.

The protein resides in the cytoplasm. It participates in protein biosynthesis; polypeptide chain elongation. Functionally, involved in peptide bond synthesis. Stimulates efficient translation and peptide-bond synthesis on native or reconstituted 70S ribosomes in vitro. Probably functions indirectly by altering the affinity of the ribosome for aminoacyl-tRNA, thus increasing their reactivity as acceptors for peptidyl transferase. This chain is Elongation factor P, found in Brucella ovis (strain ATCC 25840 / 63/290 / NCTC 10512).